The chain runs to 263 residues: uncharacterized protein (263 aa).

Positions 44–131 (QVYSLGTPNG…YLADKFNHLI (88 aa)) constitute a GST N-terminal domain. The 130-residue stretch at 134 to 263 (DWAQRTEVLN…ALEVDYKAIK (130 aa)) folds into the GST C-terminal domain.

This sequence belongs to the GST superfamily. As to quaternary structure, homodimer.

This is an uncharacterized protein from Streptococcus mutans serotype c (strain ATCC 700610 / UA159).